The sequence spans 541 residues: MPRRKQSHPQPVKCEGVKVDTEDSLDEGPGALVLESDLLLGQDLEFEEEEEEEEGDGNSDQLMGFERDSEGDSLGARPGLPYGLSDDESGGGRALSAESEVEEPARGPGEARGERPGPACQLCGGPTGEGPCCGAGGPGGGPLLPPRLLYSCRLCTFVSHYSSHLKRHMQTHSGEKPFRCGRCPYASAQLVNLTRHTRTHTGEKPYRCPHCPFACSSLGNLRRHQRTHAGPPTPPCPTCGFRCCTPRPARPPSPTEQEGAVPRRPEDALLLPDLSLHVPPGGASFLPDCGQLRGEGEGLCGTGSEPLPELLFPWTCRGCGQELEEGEGSRLGAAMCGRCMRGEAGGGASGGPQGPSDKGFACSLCPFATHYPNHLARHMKTHSGEKPFRCARCPYASAHLDNLKRHQRVHTGEKPYKCPLCPYACGNLANLKRHGRIHSGDKPFRCSLCNYSCNQSMNLKRHMLRHTGEKPFRCATCAYTTGHWDNYKRHQKVHGHGGAGGPGLSASEGWAPPHSPPSVLSSRGPPALGTAGSRAVHTDSS.

A disordered region spans residues 1 to 118 (MPRRKQSHPQ…GEARGERPGP (118 aa)). Residues 44-57 (LEFEEEEEEEEGDG) are compositionally biased toward acidic residues. Ser85 and Ser96 each carry phosphoserine. The segment covering 103–115 (EPARGPGEARGER) has biased composition (basic and acidic residues). 8 consecutive C2H2-type zinc fingers follow at residues 150–172 (YSCRLCTFVSHYSSHLKRHMQTH), 178–200 (FRCGRCPYASAQLVNLTRHTRTH), 206–228 (YRCPHCPFACSSLGNLRRHQRTH), 360–382 (FACSLCPFATHYPNHLARHMKTH), 388–410 (FRCARCPYASAHLDNLKRHQRVH), 416–438 (YKCPLCPYACGNLANLKRHGRIH), 444–466 (FRCSLCNYSCNQSMNLKRHMLRH), and 472–494 (FRCATCAYTTGHWDNYKRHQKVH). The tract at residues 492–541 (KVHGHGGAGGPGLSASEGWAPPHSPPSVLSSRGPPALGTAGSRAVHTDSS) is disordered.

Belongs to the krueppel C2H2-type zinc-finger protein family. In terms of assembly, binds DNA. Can associate with the proximal promoter regions of PAX6 and SP4, and their known targets including ARR3, RHO, OPN1MW2 and OPN1SW. In the retina, expressed in the outer and inner nuclear layers, and the ganglion cell layer.

The protein resides in the nucleus. Transcriptional regulator that plays a role in retinal development and maintenance. The protein is Zinc finger protein 513 (ZNF513) of Homo sapiens (Human).